A 1118-amino-acid polypeptide reads, in one-letter code: Carbamoyl phosphate synthase arginine-specific large chain (1118 aa).

A carboxyphosphate synthetic domain region spans residues 23–420 (QLVEGVNSVL…AFQKALRQVD (398 aa)). ATP-binding residues include R150, R190, G196, G197, K227, L229, E234, G260, V261, H262, Q303, and E317. Positions 154–346 (ASALKDINIP…LAYTAAKIGL (193 aa)) constitute an ATP-grasp 1 domain. Q303, E317, and N319 together coordinate Mg(2+). Residues Q303, E317, and N319 each contribute to the Mn(2+) site. Residues 421–573 (PSLLGFQGST…YTTYNATKND (153 aa)) are oligomerization domain. The interval 574–958 (VEFNENGMLV…SYWTAIQSTM (385 aa)) is carbamoyl phosphate synthetic domain. One can recognise an ATP-grasp 2 domain in the interval 698-890 (SSILDSIDVD…FIEIAVKAFL (193 aa)). Residues R734, K773, I775, E780, G805, V806, H807, S808, Q848, and E861 each coordinate ATP. Mg(2+)-binding residues include Q848, E861, and N863. 3 residues coordinate Mn(2+): Q848, E861, and N863. Positions 959–1102 (NFHVPLPPSG…KILESHDVIV (144 aa)) are allosteric domain. Residues 960 to 1118 (FHVPLPPSGI…WDEFIGFKAY (159 aa)) form the MGS-like domain.

Belongs to the CarB family. In terms of assembly, heterodimer composed of 2 chains; the small (or glutamine) chain promotes the hydrolysis of glutamine to ammonia, which is used by the large (or ammonia) chain to synthesize carbamoyl phosphate. Mg(2+) serves as cofactor. It depends on Mn(2+) as a cofactor.

Its subcellular location is the cytoplasm. It carries out the reaction hydrogencarbonate + L-glutamine + 2 ATP + H2O = carbamoyl phosphate + L-glutamate + 2 ADP + phosphate + 2 H(+). It catalyses the reaction hydrogencarbonate + NH4(+) + 2 ATP = carbamoyl phosphate + 2 ADP + phosphate + 2 H(+). It functions in the pathway amino-acid biosynthesis; L-arginine biosynthesis; carbamoyl phosphate from bicarbonate: step 1/1. Its function is as follows. Large subunit of the arginine-specific carbamoyl phosphate synthase (CPSase). CPSase catalyzes the formation of carbamoyl phosphate from the ammonia moiety of glutamine, hydrogencarbonate, and phosphate donated by ATP, constituting the first step of 2 biosynthetic pathways, one leading to arginine and/or urea and the other to pyrimidine nucleotides. The large subunit (synthetase) binds the substrates ammonia (free or transferred from glutamine from the small subunit), hydrogencarbonate and ATP and carries out an ATP-coupled ligase reaction, activating hydrogencarbonate by forming carboxy phosphate which reacts with ammonia to form carbamoyl phosphate. The protein is Carbamoyl phosphate synthase arginine-specific large chain (CPA2) of Saccharomyces cerevisiae (strain ATCC 204508 / S288c) (Baker's yeast).